Consider the following 441-residue polypeptide: Interferon-related developmental regulator 2 (441 aa).

The segment covering 1-15 (MPRARKGNTPRKGGQ) has biased composition (basic residues). Positions 1–72 (MPRARKGNTP…TVDEQGPQED (72 aa)) are disordered. The span at 63–72 (TVDEQGPQED) shows a compositional bias: acidic residues.

Belongs to the IFRD family. As to quaternary structure, associates with ribosomes; promoting ribosome inactivation.

Functionally, ribosome-binding protein that acts as an inhibitor of mRNA translation by promoting ribosome inactivation. Associates with the P- and E-sites of the ribosome and inserts a C-terminal helix into the mRNA exit channel to preclude translation. The protein is Interferon-related developmental regulator 2 of Oryctolagus cuniculus (Rabbit).